A 314-amino-acid chain; its full sequence is Probable cell division protein WhiA (314 aa).

Positions 274-308 (SLKELGEMMSTGKISKSGVNHRLRKLNEMADKLRS) form a DNA-binding region, H-T-H motif.

This sequence belongs to the WhiA family.

Functionally, involved in cell division and chromosome segregation. The polypeptide is Probable cell division protein WhiA (Staphylococcus saprophyticus subsp. saprophyticus (strain ATCC 15305 / DSM 20229 / NCIMB 8711 / NCTC 7292 / S-41)).